Reading from the N-terminus, the 279-residue chain is Phenylalanine 3-hydroxylase (279 aa).

Positions 140, 145, and 186 each coordinate Fe cation.

This sequence belongs to the biopterin-dependent aromatic amino acid hydroxylase family. The cofactor is Fe(2+).

The catalysed reaction is (6R)-L-erythro-5,6,7,8-tetrahydrobiopterin + L-phenylalanine + O2 = 3-hydroxy-L-phenylalanine + (4aS,6R)-4a-hydroxy-L-erythro-5,6,7,8-tetrahydrobiopterin. In vitro, catalyzes the highly regiospecific C-3 hydroxylation of L-phenylalanine (L-Phe) to yield 3-hydroxy-L-phenylalanine (meta-Tyr), an amino acid found in bacterial secondary metabolites such as sanglifehrin A and some pacidamycins. Tetrahydrobiopterin (BH4) seems to be the physiological pterin, however the hydroxylase is also able to use 6-methyltetrahydropterin (6-MePH4). The polypeptide is Phenylalanine 3-hydroxylase (Streptomyces coeruleorubidus).